The following is a 453-amino-acid chain: Jacalin-related lectin 40 (453 aa).

3 Jacalin-type lectin domains span residues 1–142, 154–296, and 306–449; these read MAQK…YFTT, HIKL…YFSS, and PEKL…YVVP. The residue at position 2 (Ala2) is an N-acetylalanine.

This sequence belongs to the jacalin lectin family. As to expression, expressed in roots.

This Arabidopsis thaliana (Mouse-ear cress) protein is Jacalin-related lectin 40 (JAL40).